A 469-amino-acid polypeptide reads, in one-letter code: Probable periplasmic serine endoprotease DegP-like (469 aa).

The N-terminal stretch at 1–25 (MNRLLKQVCMVVVSSFMMASMLTHA) is a signal peptide. Active-site charge relay system residues include His-114, Asp-144, and Ser-217. Substrate is bound by residues 215–217 (GNS) and 272–276 (LGVLI). PDZ domains are found at residues 261 to 352 (LKSD…YRDG) and 358 to 458 (SVTL…IRQG).

This sequence belongs to the peptidase S1C family.

The protein localises to the periplasm. The enzyme catalyses Acts on substrates that are at least partially unfolded. The cleavage site P1 residue is normally between a pair of hydrophobic residues, such as Val-|-Val.. Its function is as follows. Might be efficient in the degradation of transiently denatured and unfolded proteins which accumulate in the periplasm following stress conditions. This is Probable periplasmic serine endoprotease DegP-like from Marinomonas sp. (strain MWYL1).